We begin with the raw amino-acid sequence, 315 residues long: Tetraacyldisaccharide 4'-kinase (315 aa).

45 to 52 (SVGGSGKT) contacts ATP.

This sequence belongs to the LpxK family.

The catalysed reaction is a lipid A disaccharide + ATP = a lipid IVA + ADP + H(+). The protein operates within glycolipid biosynthesis; lipid IV(A) biosynthesis; lipid IV(A) from (3R)-3-hydroxytetradecanoyl-[acyl-carrier-protein] and UDP-N-acetyl-alpha-D-glucosamine: step 6/6. In terms of biological role, transfers the gamma-phosphate of ATP to the 4'-position of a tetraacyldisaccharide 1-phosphate intermediate (termed DS-1-P) to form tetraacyldisaccharide 1,4'-bis-phosphate (lipid IVA). In Aquifex aeolicus (strain VF5), this protein is Tetraacyldisaccharide 4'-kinase.